Here is a 459-residue protein sequence, read N- to C-terminus: Cytosolic carboxypeptidase 6 (459 aa).

The 277-residue stretch at 142-418 (IPYTYGQMQI…AFCRALLNFY (277 aa)) folds into the Peptidase M14 domain. Zn(2+) contacts are provided by H204, E207, and H302. E376 acts as the Proton donor/acceptor in catalysis.

The protein belongs to the peptidase M14 family. Requires Zn(2+) as cofactor. Expressed in labial and amphid neurons.

The protein localises to the cytoplasm. It catalyses the reaction (L-glutamyl)(n+1)-gamma-L-glutamyl-L-glutamyl-[protein] + H2O = (L-glutamyl)(n)-gamma-L-glutamyl-L-glutamyl-[protein] + L-glutamate. In terms of biological role, metallocarboxypeptidase that catalyzes the removing of polyglutamate side chains that are present on the gamma-carboxyl group of glutamate residues of tubulin in sensory cilia. Probably via the deglutamylation of tubulin, promotes microtubule stability required for axon regrowth after injury. Also regulates microtubule dynamics in uterine muscle cells. The protein is Cytosolic carboxypeptidase 6 of Caenorhabditis elegans.